We begin with the raw amino-acid sequence, 417 residues long: NADH-quinone oxidoreductase subunit D (417 aa).

Belongs to the complex I 49 kDa subunit family. As to quaternary structure, NDH-1 is composed of 14 different subunits. Subunits NuoB, C, D, E, F, and G constitute the peripheral sector of the complex.

It localises to the cell inner membrane. The enzyme catalyses a quinone + NADH + 5 H(+)(in) = a quinol + NAD(+) + 4 H(+)(out). NDH-1 shuttles electrons from NADH, via FMN and iron-sulfur (Fe-S) centers, to quinones in the respiratory chain. The immediate electron acceptor for the enzyme in this species is believed to be ubiquinone. Couples the redox reaction to proton translocation (for every two electrons transferred, four hydrogen ions are translocated across the cytoplasmic membrane), and thus conserves the redox energy in a proton gradient. This chain is NADH-quinone oxidoreductase subunit D, found in Hydrogenovibrio crunogenus (strain DSM 25203 / XCL-2) (Thiomicrospira crunogena).